A 263-amino-acid polypeptide reads, in one-letter code: 3-methyl-2-oxobutanoate hydroxymethyltransferase (263 aa).

The Mg(2+) site is built by D45 and D84. Residues 45–46, D84, and K112 contribute to the 3-methyl-2-oxobutanoate site; that span reads DS. Mg(2+) is bound at residue E114. E180 serves as the catalytic Proton acceptor.

It belongs to the PanB family. Homodecamer; pentamer of dimers. Mg(2+) serves as cofactor.

The protein localises to the cytoplasm. The enzyme catalyses 3-methyl-2-oxobutanoate + (6R)-5,10-methylene-5,6,7,8-tetrahydrofolate + H2O = 2-dehydropantoate + (6S)-5,6,7,8-tetrahydrofolate. The protein operates within cofactor biosynthesis; (R)-pantothenate biosynthesis; (R)-pantoate from 3-methyl-2-oxobutanoate: step 1/2. Functionally, catalyzes the reversible reaction in which hydroxymethyl group from 5,10-methylenetetrahydrofolate is transferred onto alpha-ketoisovalerate to form ketopantoate. The chain is 3-methyl-2-oxobutanoate hydroxymethyltransferase from Salmonella agona (strain SL483).